A 902-amino-acid polypeptide reads, in one-letter code: Androgen receptor (902 aa).

Residues 1–540 (MEVQLGLGRV…PIDYYFPPQK (540 aa)) form a modulating region. The segment at 1–569 (MEVQLGLGRV…GSCKVFFKRA (569 aa)) is interaction with ZNF318. Disordered stretches follow at residues 35-146 (QNPG…LSLL) and 194-224 (QQEV…YLGG). Position 61 is a phosphoserine; by CDK9 (Ser61). The residue at position 75 (Ser75) is a Phosphoserine. Residues 94–103 (QPSQQQSASE) are compositionally biased toward low complexity. Composition is skewed to polar residues over residues 196–205 (EVISEGSSSV) and 213–224 (APSSSKDSYLGG). Tyr221 is subject to Phosphotyrosine; by CSK. The residue at position 254 (Ser254) is a Phosphoserine. Position 265 is a phosphotyrosine; by CSK and TNK2 (Tyr265). Ser290 is subject to Phosphoserine. Phosphotyrosine; by CSK occurs at positions 305, 344, 355, and 360. Phosphotyrosine; by CSK and TNK2 is present on Tyr361. A Glycyl lysine isopeptide (Lys-Gly) (interchain with G-Cter in SUMO) cross-link involves residue Lys384. A Phosphotyrosine; by CSK modification is found at Tyr391. The tract at residues 439-465 (EGQLYGPGGGGGSSSPSDAGPVAPYGY) is disordered. A Glycyl lysine isopeptide (Lys-Gly) (interchain with G-Cter in SUMO) cross-link involves residue Lys503. 2 positions are modified to phosphotyrosine; by CSK: Tyr517 and Tyr534. The segment at 534-901 (YYFPPQKTCL…GKVKPIYFHT (368 aa)) is interaction with LPXN. The segment at residues 541-614 (TCLICGDEAS…AGMTLGARKL (74 aa)) is a DNA-binding region (nuclear receptor). NR C4-type zinc fingers lie at residues 542–562 (CLIC…CGSC) and 578–602 (CASR…LRKC). The tract at residues 554–644 (YGALTCGSCK…TEDPSQKMTV (91 aa)) is interaction with HIPK3. An interaction with CCAR1 region spans residues 574-901 (QKYLCASRND…GKVKPIYFHT (328 aa)). Residues 607–901 (MTLGARKLKK…GKVKPIYFHT (295 aa)) are interaction with KAT7. Ser633 is subject to Phosphoserine. Residues 651–882 (ECQPIFLNVL…DFPEMMAEII (232 aa)) enclose the NR LBD domain. The 17beta-hydroxy-5alpha-androstan-3-one site is built by Asn688 and Arg735. Residues Lys828 and Lys830 each participate in a glycyl lysine isopeptide (Lys-Gly) (interchain with G-Cter in ubiquitin) cross-link. 17beta-hydroxy-5alpha-androstan-3-one is bound at residue Thr860. The residue at position 898 (Tyr898) is a Phosphotyrosine; by CSK.

Belongs to the nuclear hormone receptor family. NR3 subfamily. In terms of assembly, binds DNA as a homodimer. Part of a ternary complex containing AR, EFCAB6/DJBP and PARK7. Interacts with HIPK3 and NR0B2 in the presence of androgen. The ligand binding domain interacts with KAT7/HBO1 in the presence of dihydrotestosterone. Interacts with EFCAB6/DJBP, PQBP1, RANBP9, RBAK, SPDEF, SRA1, TGFB1I1, ZNF318 and RREB1. Interacts with ZMIZ1/ZIMP10 and ZMIZ2/ZMIP7 which both enhance its transactivation activity. Interacts with SLC30A9 and RAD54L2/ARIP4. Interacts with MACROD1 (via macro domain). Interacts via the ligand-binding domain with LXXLL and FXXLF motifs from NCOA1, NCOA2, NCOA3 and MAGEA11. Interacts (via nuclear receptor DNA binding domain and nuclear receptor ligand binding domain) with NCOA4. The AR N-terminal poly-Gln region binds Ran resulting in enhancement of AR-mediated transactivation. Ran-binding decreases as the poly-Gln length increases. Interacts with HIP1 (via coiled coil domain). Interacts (via ligand-binding domain) with TRIM68. Interacts with TNK2. Interacts with USP26. Interacts with RNF6. Interacts (regulated by RNF6 probably through polyubiquitination) with RNF14; regulates AR transcriptional activity. Interacts with PRMT2 and TRIM24. Interacts with RACK1. Interacts with RANBP10; this interaction enhances dihydrotestosterone-induced AR transcriptional activity. Interacts with PRPF6 in a hormone-independent way; this interaction enhances dihydrotestosterone-induced AR transcriptional activity. Interacts with STK4/MST1. Interacts with ZIPK/DAPK3. Interacts with LPXN. Interacts with MAK. Part of a complex containing AR, MAK and NCOA3. Interacts with CRY1. Interacts with CCAR1 and GATA2. Interacts with BUD31. Interacts with ARID4A. Interacts with ARID4B. Interacts (via NR LBD domain) with ZBTB7A; the interaction is direct and androgen-dependent. Interacts with NCOR1. Interacts with NCOR2. Interacts with CRY2 in a ligand-dependent manner. Post-translationally, phosphorylated in prostate cancer cells in response to several growth factors including EGF. Phosphorylation is induced by c-Src kinase (CSK). Tyr-517 is one of the major phosphorylation sites and an increase in phosphorylation and Src kinase activity is associated with prostate cancer progression. Phosphorylation by TNK2 enhances the DNA-binding and transcriptional activity. Phosphorylation at Ser-61 by CDK9 regulates AR promoter selectivity and cell growth. Phosphorylation by PAK6 leads to AR-mediated transcription inhibition. In terms of processing, sumoylated on Lys-384 (major) and Lys-503. Ubiquitinated. Deubiquitinated by USP26. 'Lys-6' and 'Lys-27'-linked polyubiquitination by RNF6 modulates AR transcriptional activity and specificity. Palmitoylated by ZDHHC7 and ZDHHC21. Palmitoylation is required for plasma membrane targeting and for rapid intracellular signaling via ERK and AKT kinases and cAMP generation. In terms of tissue distribution, highest levels in the seminal vesicle, ventral prostate and coagulating gland with lower levels in the kidney and levator ani muscle.

It localises to the nucleus. Its subcellular location is the cytoplasm. In terms of biological role, steroid hormone receptors are ligand-activated transcription factors that regulate eukaryotic gene expression and affect cellular proliferation and differentiation in target tissues. Transcription factor activity is modulated by bound coactivator and corepressor proteins like ZBTB7A that recruits NCOR1 and NCOR2 to the androgen response elements/ARE on target genes, negatively regulating androgen receptor signaling and androgen-induced cell proliferation. Transcription activation is also down-regulated by NR0B2. Activated, but not phosphorylated, by HIPK3 and ZIPK/DAPK3. The sequence is that of Androgen receptor (Ar) from Rattus norvegicus (Rat).